Here is a 393-residue protein sequence, read N- to C-terminus: Pre-mRNA-splicing regulator WTAP (393 aa).

The disordered stretch occupies residues Gln240–Leu393. Basic and acidic residues predominate over residues Glu254 to Gly267. The segment covering Gly272–Ser286 has biased composition (polar residues). Over residues Leu310–Ser319 the composition is skewed to basic and acidic residues. The segment covering Arg320–Thr353 has biased composition (polar residues). Over residues Asp354–Val365 the composition is skewed to basic and acidic residues. The span at Gly369–Leu393 shows a compositional bias: polar residues.

It belongs to the fl(2)d family. In terms of assembly, component of the WMM complex, a N6-methyltransferase complex composed of a catalytic subcomplex, named MAC, and of an associated subcomplex, named MACOM. Component of the MACOM subcomplex.

It is found in the nucleus speckle. The protein resides in the nucleus. It localises to the nucleoplasm. Its function is as follows. Associated component of the WMM complex, a complex that mediates N6-methyladenosine (m6A) methylation of RNAs, a modification that plays a role in the efficiency of mRNA splicing and RNA processing. The sequence is that of Pre-mRNA-splicing regulator WTAP from Xenopus tropicalis (Western clawed frog).